Reading from the N-terminus, the 224-residue chain is tRNA (guanine-N(7)-)-methyltransferase (224 aa).

The S-adenosyl-L-methionine site is built by Glu56, Glu81, Asp108, and Asp131. Asp131 is an active-site residue. Residues Lys135, Asp167, and 202-205 contribute to the substrate site; that span reads TKFE.

It belongs to the class I-like SAM-binding methyltransferase superfamily. TrmB family.

The catalysed reaction is guanosine(46) in tRNA + S-adenosyl-L-methionine = N(7)-methylguanosine(46) in tRNA + S-adenosyl-L-homocysteine. Its pathway is tRNA modification; N(7)-methylguanine-tRNA biosynthesis. Functionally, catalyzes the formation of N(7)-methylguanine at position 46 (m7G46) in tRNA. The chain is tRNA (guanine-N(7)-)-methyltransferase from Nitrosomonas europaea (strain ATCC 19718 / CIP 103999 / KCTC 2705 / NBRC 14298).